Reading from the N-terminus, the 443-residue chain is Anamorsin homolog (443 aa).

The N-terminal SAM-like domain stretch occupies residues 136–301; the sequence is LSSAPRVLVL…AAGVADALSG (166 aa). The linker stretch occupies residues 302-331; that stretch reads NRGALPNGTAQTDGDDFIDESTLIDPTESY. Residues C341, C348, C351, and C353 each contribute to the [2Fe-2S] cluster site. The segment at 341–353 is fe-S binding site A; the sequence is CASRPKACPNCTC. 4 residues coordinate [4Fe-4S] cluster: C380, C383, C391, and C394. Short sequence motifs (cx2C motif) lie at residues 380–383 and 391–394; these read CGNC and CAGC. The segment at 380-394 is fe-S binding site B; the sequence is CGNCYLGDAFRCAGC.

The protein belongs to the anamorsin family. Monomer. It depends on [2Fe-2S] cluster as a cofactor. [4Fe-4S] cluster serves as cofactor.

The protein localises to the cytoplasm. It localises to the mitochondrion intermembrane space. Component of the cytosolic iron-sulfur (Fe-S) protein assembly (CIA) machinery. Required for the maturation of extramitochondrial Fe-S proteins. Part of an electron transfer chain functioning in an early step of cytosolic Fe-S biogenesis, facilitating the de novo assembly of a [4Fe-4S] cluster on the cytosolic Fe-S scaffold complex. Electrons are transferred from NADPH via a FAD- and FMN-containing diflavin oxidoreductase. Together with the diflavin oxidoreductase, also required for the assembly of the diferric tyrosyl radical cofactor of ribonucleotide reductase (RNR), probably by providing electrons for reduction during radical cofactor maturation in the catalytic small subunit. In Toxoplasma gondii (strain ATCC 50861 / VEG), this protein is Anamorsin homolog.